The primary structure comprises 330 residues: Aspartate--ammonia ligase (330 aa).

This sequence belongs to the class-II aminoacyl-tRNA synthetase family. AsnA subfamily.

The protein localises to the cytoplasm. The enzyme catalyses L-aspartate + NH4(+) + ATP = L-asparagine + AMP + diphosphate + H(+). Its pathway is amino-acid biosynthesis; L-asparagine biosynthesis; L-asparagine from L-aspartate (ammonia route): step 1/1. The polypeptide is Aspartate--ammonia ligase (Shigella sonnei (strain Ss046)).